The chain runs to 242 residues: MSFRALTMRSAVARTALNNTIRSARVATPYLGIRHSSSTPTPDPKTKAASLIDALPGNTALTKTGILGTSAAAIIYGISNQLYVINDESILLLIFLGFSGLVAKFLAPLYKDFADARIKKIGSILNSSRERHVDAVKDRIESVSELQNVSETTKVLFDVSKETVELEAKAFELKQKVELAHEAKSVLDSWVRYEASLRQLQQKQIAEGIISKVESELTNPKFQDRVLQQSIAEVEQVLANIK.

The N-terminal 35 residues, 1 to 35, are a transit peptide targeting the mitochondrion; that stretch reads MSFRALTMRSAVARTALNNTIRSARVATPYLGIRH.

This sequence belongs to the eukaryotic ATPase B chain family. F-type ATPases have 2 components, CF(1) - the catalytic core - and CF(0) - the membrane proton channel. In yeast, the dimeric form of ATP synthase consists of 17 polypeptides: alpha, beta, gamma, delta, epsilon, 4 (B), 5 (OSCP), 6 (A), 8, 9 (C), d, E (Tim11), f, g, h, i/j and k.

It localises to the mitochondrion. Its subcellular location is the mitochondrion inner membrane. Mitochondrial membrane ATP synthase (F(1)F(0) ATP synthase or Complex V) produces ATP from ADP in the presence of a proton gradient across the membrane which is generated by electron transport complexes of the respiratory chain. F-type ATPases consist of two structural domains, F(1) - containing the extramembraneous catalytic core, and F(0) - containing the membrane proton channel, linked together by a central stalk and a peripheral stalk. During catalysis, ATP synthesis in the catalytic domain of F(1) is coupled via a rotary mechanism of the central stalk subunits to proton translocation. Part of the complex F(0) domain and the peripheric stalk, which acts as a stator to hold the catalytic alpha(3)beta(3) subcomplex and subunit a/ATP6 static relative to the rotary elements. This is ATP synthase subunit 4, mitochondrial (ATP4) from Candida glabrata (strain ATCC 2001 / BCRC 20586 / JCM 3761 / NBRC 0622 / NRRL Y-65 / CBS 138) (Yeast).